The primary structure comprises 702 residues: Phosphatase and actin regulator 4 (702 aa).

Disordered stretches follow at residues 1-38, 82-194, and 222-363; these read MEDP…SKFS, GVLL…SSGG, and NLSV…PFPA. One copy of the RPEL 1 repeat lies at 63 to 88; the sequence is EVLERKISMRKPREELVKRGVLLEDP. The segment covering 106-120 has biased composition (polar residues); it reads GHTTPIGNARSSSPV. Phosphoserine is present on residues S116, S118, S131, and S147. Residues 147-156 show a composition bias toward polar residues; that stretch reads STGSQPNSEA. Pro residues predominate over residues 163-173; that stretch reads VPKPPLLPPKR. Residues 233-250 show a composition bias toward low complexity; it reads TLPAAPASTNTTATPSLT. Phosphoserine is present on residues S270 and S291. The segment covering 301–318 has biased composition (polar residues); it reads PSTSVPTLESAAAITTKT. Phosphoserine occurs at positions 342 and 344. Residues 342–362 show a composition bias toward pro residues; sequence SPSPPLPTHIPPEPPRTPPFP. T358 bears the Phosphothreonine mark. Position 427 is a phosphoserine (S427). T432 carries the post-translational modification Phosphothreonine. Phosphoserine is present on residues S443, S453, and S464. Positions 473–536 are disordered; that stretch reads KVPDDEEEEE…EEDEDESYQS (64 aa). A compositionally biased stretch (low complexity) spans 486 to 497; that stretch reads PSTFSEETTPTS. The segment covering 508–518 has biased composition (acidic residues); sequence EEEEKESDSDS. A phosphoserine mark is found at S514, S516, S557, and S590. RPEL repeat units follow at residues 583–608 and 621–646; these read NTLI…QPKN and RRLT…RFNE. A disordered region spans residues 592–615; the sequence is RPTPEELEQRNILQPKNEADRQAE. At S628 the chain carries Phosphoserine.

It belongs to the phosphatase and actin regulator family. As to quaternary structure, binds PPP1CA and actin.

The protein resides in the cytoplasm. It is found in the cell projection. The protein localises to the lamellipodium. Functionally, regulator of protein phosphatase 1 (PP1) required for neural tube and optic fissure closure, and enteric neural crest cell (ENCCs) migration during development. Acts as an activator of PP1 by interacting with PPP1CA and preventing phosphorylation of PPP1CA at 'Thr-320'. During neural tube closure, localizes to the ventral neural tube and activates PP1, leading to down-regulate cell proliferation within cranial neural tissue and the neural retina. Also acts as a regulator of migration of enteric neural crest cells (ENCCs) by activating PP1, leading to dephosphorylation and subsequent activation of cofilin (COF1 or COF2) and repression of the integrin signaling through the RHO/ROCK pathway. This chain is Phosphatase and actin regulator 4 (PHACTR4), found in Pongo abelii (Sumatran orangutan).